Reading from the N-terminus, the 376-residue chain is Homeobox protein extradenticle (376 aa).

The interval 16 to 35 is disordered; it reads APQGYSLSGQDDGQNTGNEN. A compositionally biased stretch (polar residues) spans 20-34; it reads YSLSGQDDGQNTGNE. Positions 38–237 constitute a PBC domain; that stretch reads RKQKDIGEIL…VMILRSRFLD (200 aa). Residues 45-124 are PBC-A; the sequence is EILQQIMSIS…EGVAGPEKGG (80 aa). The segment at 127–237 is PBC-B; it reads AAAASAAAAS…VMILRSRFLD (111 aa). Residues 238–300 constitute a DNA-binding region (homeobox; TALE-type); the sequence is ARRKRRNFSK…NKRIRYKKNI (63 aa). Over residues 318–335 the composition is skewed to low complexity; the sequence is ASPYSMAGPPSGTTTPMM. The disordered stretch occupies residues 318–376; sequence ASPYSMAGPPSGTTTPMMSPAPPQDSMGYTMGSGGYDQQQPYDNSMGGYDPNLHQDLSP.

Belongs to the TALE/PBX homeobox family. In terms of assembly, interacts with Ubx and hth.

The protein localises to the nucleus. Its function is as follows. Transcription factor which acts with the selector homeodomain proteins altering the regulation of downstream target genes such as wingless (wg), teashirt (tsh) and decapentaplegic (dpp), thus affecting segmental identity. Delimits the eye field and prevent inappropriate eye development. Required for proper localization of chordotonal organs within the peripheral nervous system. In Drosophila pseudoobscura pseudoobscura (Fruit fly), this protein is Homeobox protein extradenticle.